The sequence spans 132 residues: Agouti-signaling protein (132 aa).

The N-terminal stretch at 1 to 22 (MDVTRLLLATLLVFLCFFTAYS) is a signal peptide. The N-linked (GlcNAc...) asparagine glycan is linked to Asn-39. Residues 61–87 (QISRKEAEKKRSSKKEASMKKVARPRT) form a disordered region. Over residues 63-79 (SRKEAEKKRSSKKEASM) the composition is skewed to basic and acidic residues. 5 cysteine pairs are disulfide-bonded: Cys-93-Cys-108, Cys-100-Cys-114, Cys-107-Cys-125, Cys-111-Cys-132, and Cys-116-Cys-123. Residues 93 to 132 (CVATRDSCKPPAPACCDPCASCQCRFFRSACSCRVLSLNC) form the Agouti domain.

It localises to the secreted. Functionally, involved in the regulation of melanogenesis. The binding of ASP to MC1R precludes alpha-MSH initiated signaling and thus blocks production of cAMP, leading to a down-regulation of eumelanogenesis (brown/black pigment) and thus increasing synthesis of pheomelanin (yellow/red pigment). The sequence is that of Agouti-signaling protein (ASIP) from Macaca maura (Moor macaque).